Here is a 557-residue protein sequence, read N- to C-terminus: Selenoprotein N (557 aa).

Residues 1-24 (MGQARPAARRPHSPDPGAQPAPPR) are disordered. The signal sequence occupies residues 1-42 (MGQARPAARRPHSPDPGAQPAPPRRRARALALLGALLAAAAA). Residues 67–102 (VLGTDGLFLFSSLDTDQDMYISPEEFKPIAEKLTGS) form the EF-hand domain. An N-linked (GlcNAc...) asparagine glycan is attached at Asn156. Position 428 (Sec428) is a non-standard amino acid, selenocysteine. 2 N-linked (GlcNAc...) asparagine glycosylation sites follow: Asn449 and Asn497.

Interacts with RYR1, RYR2 and RYR3. Post-translationally, N-glycosylated.

It is found in the endoplasmic reticulum membrane. Functionally, plays an important role in cell protection against oxidative stress and in the regulation of redox-related calcium homeostasis. Regulates the calcium level of the ER by protecting the calcium pump ATP2A2 against the oxidoreductase ERO1A-mediated oxidative damage. Within the ER, ERO1A activity increases the concentration of H(2)O(2), which attacks the luminal thiols in ATP2A2 and thus leads to cysteinyl sulfenic acid formation (-SOH) and SEPN1 reduces the SOH back to free thiol (-SH), thus restoring ATP2A2 activity. Acts as a modulator of ryanodine receptor (RyR) activity: protects RyR from oxidation due to increased oxidative stress, or directly controls the RyR redox state, regulating the RyR-mediated calcium mobilization required for normal muscle development and differentiation. Essential for muscle regeneration and satellite cell maintenance in skeletal muscle. This is Selenoprotein N from Mus musculus (Mouse).